An 856-amino-acid polypeptide reads, in one-letter code: DNA mismatch repair protein MutS (856 aa).

618 to 625 (GPNMGGKS) serves as a coordination point for ATP.

Belongs to the DNA mismatch repair MutS family.

In terms of biological role, this protein is involved in the repair of mismatches in DNA. It is possible that it carries out the mismatch recognition step. This protein has a weak ATPase activity. The chain is DNA mismatch repair protein MutS from Shewanella baltica (strain OS195).